The primary structure comprises 740 residues: Probable apyrase 7 (740 aa).

Over 1 to 113 (MVFGRITELF…PSTRRKLIRA (113 aa)) the chain is Cytoplasmic. The helical transmembrane segment at 114–134 (VMIVMCLFLFAFLVYIVSMYI) threads the bilayer. The Extracellular portion of the chain corresponds to 135–581 (YTNWSRGASR…LKSYETLSMK (447 aa)). Asparagine 137 is a glycosylation site (N-linked (GlcNAc...) asparagine). 147-157 (VVFDCGSTGTR) provides a ligand contact to ATP. Asparagine 208 carries N-linked (GlcNAc...) asparagine glycosylation. The active-site Proton acceptor is the glutamate 284. An ATP-binding site is contributed by 309-319 (GALDLGGSSLQ). 4 N-linked (GlcNAc...) asparagine glycosylation sites follow: asparagine 330, asparagine 374, asparagine 439, and asparagine 484. A helical membrane pass occupies residues 582 to 602 (INPIALISILILSLLLLLCAL). Over 603-740 (SRVSNCLPRF…SLADSHMLKM (138 aa)) the chain is Cytoplasmic. Residues 706–740 (FWSSPRRSQMRLQSRRSQSREDLSSSLADSHMLKM) are disordered. Residues 708–721 (SSPRRSQMRLQSRR) are compositionally biased toward low complexity.

It belongs to the GDA1/CD39 NTPase family. Ca(2+) serves as cofactor. In terms of tissue distribution, detected in mature pollen grains. Also expressed in more diverse tissues such as roots, leaves, stems, pistils and sepals. More particularly expressed in the vascular bundle.

It localises to the membrane. The catalysed reaction is a ribonucleoside 5'-triphosphate + 2 H2O = a ribonucleoside 5'-phosphate + 2 phosphate + 2 H(+). Functionally, catalyzes the hydrolysis of phosphoanhydride bonds of nucleoside tri- and di-phosphates. Involved in the regulation of pollen and anther development. The protein is Probable apyrase 7 (APY7) of Arabidopsis thaliana (Mouse-ear cress).